We begin with the raw amino-acid sequence, 112 residues long: T cell receptor alpha variable 13-1 (112 aa).

A signal peptide spans 1–20 (MTSIRAVFIFLWLQLDLVNG). An Ig-like domain is found at 21–112 (ENVEQHPSTL…DSAVYFCAAS (92 aa)). A disulfide bridge connects residues cysteine 42 and cysteine 109. Residue asparagine 86 is glycosylated (N-linked (GlcNAc...) asparagine).

As to quaternary structure, alpha-beta TR is a heterodimer composed of an alpha and beta chain; disulfide-linked. The alpha-beta TR is associated with the transmembrane signaling CD3 coreceptor proteins to form the TR-CD3 (TcR or TCR). The assembly of alpha-beta TR heterodimers with CD3 occurs in the endoplasmic reticulum where a single alpha-beta TR heterodimer associates with one CD3D-CD3E heterodimer, one CD3G-CD3E heterodimer and one CD247 homodimer forming a stable octameric structure. CD3D-CD3E and CD3G-CD3E heterodimers preferentially associate with TR alpha and TR beta chains, respectively. The association of the CD247 homodimer is the last step of TcR assembly in the endoplasmic reticulum and is required for transport to the cell surface.

The protein resides in the cell membrane. Functionally, v region of the variable domain of T cell receptor (TR) alpha chain that participates in the antigen recognition. Alpha-beta T cell receptors are antigen specific receptors which are essential to the immune response and are present on the cell surface of T lymphocytes. Recognize peptide-major histocompatibility (MH) (pMH) complexes that are displayed by antigen presenting cells (APC), a prerequisite for efficient T cell adaptive immunity against pathogens. Binding of alpha-beta TR to pMH complex initiates TR-CD3 clustering on the cell surface and intracellular activation of LCK that phosphorylates the ITAM motifs of CD3G, CD3D, CD3E and CD247 enabling the recruitment of ZAP70. In turn ZAP70 phosphorylates LAT, which recruits numerous signaling molecules to form the LAT signalosome. The LAT signalosome propagates signal branching to three major signaling pathways, the calcium, the mitogen-activated protein kinase (MAPK) kinase and the nuclear factor NF-kappa-B (NF-kB) pathways, leading to the mobilization of transcription factors that are critical for gene expression and essential for T cell growth and differentiation. The T cell repertoire is generated in the thymus, by V-(D)-J rearrangement. This repertoire is then shaped by intrathymic selection events to generate a peripheral T cell pool of self-MH restricted, non-autoaggressive T cells. Post-thymic interaction of alpha-beta TR with the pMH complexes shapes TR structural and functional avidity. This Homo sapiens (Human) protein is T cell receptor alpha variable 13-1.